Here is a 368-residue protein sequence, read N- to C-terminus: tRNA-specific 2-thiouridylase MnmA (368 aa).

ATP is bound by residues 11 to 18 and Met37; that span reads GMSGGVDS. The interval 97–99 is interaction with target base in tRNA; that stretch reads NPD. The active-site Nucleophile is Cys102. The cysteines at positions 102 and 199 are disulfide-linked. Gly127 is a binding site for ATP. The segment at 149 to 151 is interaction with tRNA; sequence KDQ. Cys199 functions as the Cysteine persulfide intermediate in the catalytic mechanism. Positions 311–312 are interaction with tRNA; the sequence is RY.

This sequence belongs to the MnmA/TRMU family. As to quaternary structure, interacts with TusE.

It is found in the cytoplasm. It catalyses the reaction S-sulfanyl-L-cysteinyl-[protein] + uridine(34) in tRNA + AH2 + ATP = 2-thiouridine(34) in tRNA + L-cysteinyl-[protein] + A + AMP + diphosphate + H(+). Catalyzes the 2-thiolation of uridine at the wobble position (U34) of tRNA(Lys), tRNA(Glu) and tRNA(Gln), leading to the formation of s(2)U34, the first step of tRNA-mnm(5)s(2)U34 synthesis. Sulfur is provided by IscS, via a sulfur-relay system. Binds ATP and its substrate tRNAs. The protein is tRNA-specific 2-thiouridylase MnmA of Escherichia coli O1:K1 / APEC.